The sequence spans 132 residues: Large ribosomal subunit protein bL17 (132 aa).

Belongs to the bacterial ribosomal protein bL17 family. As to quaternary structure, part of the 50S ribosomal subunit. Contacts protein L32.

The chain is Large ribosomal subunit protein bL17 from Shewanella woodyi (strain ATCC 51908 / MS32).